A 122-amino-acid chain; its full sequence is Flagellar protein FliT (122 aa).

The tract at residues 1-50 (MTSTVEFINRWQRIALLSQSLLELAQRGEWELLLQQEVSYLQSIETVMEK) is required for homodimerization. The segment at 60-98 (IQDMVAGYIKQTLDNEQRLKGLLQQRLDELSGLIGQSTR) is fliD binding.

The protein belongs to the FliT family. As to quaternary structure, homodimer. Interacts with FliD and FlhC.

It is found in the cytoplasm. Its subcellular location is the cytosol. Dual-function protein that regulates the transcription of class 2 flagellar operons and that also acts as an export chaperone for the filament-capping protein FliD. As a transcriptional regulator, acts as an anti-FlhDC factor; it directly binds FlhC, thus inhibiting the binding of the FlhC/FlhD complex to class 2 promoters, resulting in decreased expression of class 2 flagellar operons. As a chaperone, effects FliD transition to the membrane by preventing its premature polymerization, and by directing it to the export apparatus. In Salmonella arizonae (strain ATCC BAA-731 / CDC346-86 / RSK2980), this protein is Flagellar protein FliT.